The following is a 331-amino-acid chain: Phenylalanine--tRNA ligase alpha subunit (331 aa).

E252 contributes to the Mg(2+) binding site.

Belongs to the class-II aminoacyl-tRNA synthetase family. Phe-tRNA synthetase alpha subunit type 1 subfamily. As to quaternary structure, tetramer of two alpha and two beta subunits. It depends on Mg(2+) as a cofactor.

Its subcellular location is the cytoplasm. The enzyme catalyses tRNA(Phe) + L-phenylalanine + ATP = L-phenylalanyl-tRNA(Phe) + AMP + diphosphate + H(+). This Stenotrophomonas maltophilia (strain R551-3) protein is Phenylalanine--tRNA ligase alpha subunit.